The sequence spans 369 residues: Probable peptidoglycan glycosyltransferase FtsW (369 aa).

Helical transmembrane passes span 11–31, 48–68, 77–97, 134–151, 154–174, 177–197, 265–285, and 306–326; these read LLSVTIILLIFSIIMVGSSSV, NFIHSIISILCMIFVFNVPIY, LILCSIILLLTLNYFGISNHG, TSTIQLISIILIVSKLLL, PDFGTLVILYSSLLFMLFLIG, FLFLSASSAIFTTIVLSLIYF, LGYLGIAMIVISLFFIFFQGM, and ISLLIIIQSIINIGSSIGILP.

This sequence belongs to the SEDS family. FtsW subfamily.

It localises to the cell inner membrane. The catalysed reaction is [GlcNAc-(1-&gt;4)-Mur2Ac(oyl-L-Ala-gamma-D-Glu-L-Lys-D-Ala-D-Ala)](n)-di-trans,octa-cis-undecaprenyl diphosphate + beta-D-GlcNAc-(1-&gt;4)-Mur2Ac(oyl-L-Ala-gamma-D-Glu-L-Lys-D-Ala-D-Ala)-di-trans,octa-cis-undecaprenyl diphosphate = [GlcNAc-(1-&gt;4)-Mur2Ac(oyl-L-Ala-gamma-D-Glu-L-Lys-D-Ala-D-Ala)](n+1)-di-trans,octa-cis-undecaprenyl diphosphate + di-trans,octa-cis-undecaprenyl diphosphate + H(+). The protein operates within cell wall biogenesis; peptidoglycan biosynthesis. Functionally, peptidoglycan polymerase that is essential for cell division. This chain is Probable peptidoglycan glycosyltransferase FtsW, found in Riesia pediculicola (strain USDA).